Reading from the N-terminus, the 78-residue chain is Exodeoxyribonuclease 7 small subunit (78 aa).

It belongs to the XseB family. In terms of assembly, heterooligomer composed of large and small subunits.

The protein localises to the cytoplasm. It carries out the reaction Exonucleolytic cleavage in either 5'- to 3'- or 3'- to 5'-direction to yield nucleoside 5'-phosphates.. In terms of biological role, bidirectionally degrades single-stranded DNA into large acid-insoluble oligonucleotides, which are then degraded further into small acid-soluble oligonucleotides. The sequence is that of Exodeoxyribonuclease 7 small subunit from Psychromonas ingrahamii (strain DSM 17664 / CCUG 51855 / 37).